A 506-amino-acid polypeptide reads, in one-letter code: Ribose import ATP-binding protein RbsA (506 aa).

2 consecutive ABC transporter domains span residues 5 to 241 (LALT…VGRR) and 254 to 498 (RDAA…TSDV). 37–44 (GENGAGKS) is a binding site for ATP.

It belongs to the ABC transporter superfamily. Ribose importer (TC 3.A.1.2.1) family. As to quaternary structure, the complex is composed of an ATP-binding protein (RbsA), two transmembrane proteins (RbsC) and a solute-binding protein (RbsB).

Its subcellular location is the cell inner membrane. The enzyme catalyses D-ribose(out) + ATP + H2O = D-ribose(in) + ADP + phosphate + H(+). Part of the ABC transporter complex RbsABC involved in ribose import. Responsible for energy coupling to the transport system. This is Ribose import ATP-binding protein RbsA from Burkholderia mallei (strain ATCC 23344).